The sequence spans 467 residues: 5'-nucleotidase domain-containing protein 1 (467 aa).

Asp16 functions as the Nucleophile in the catalytic mechanism. Residues Asp16 and Asp18 each coordinate Mg(2+). The Proton donor role is filled by Asp18. An N6-acetyllysine modification is found at Lys181. Position 323 (Asp323) interacts with Mg(2+).

The protein belongs to the 5'(3')-deoxyribonucleotidase family.

This is 5'-nucleotidase domain-containing protein 1 (Nt5dc1) from Mus musculus (Mouse).